A 210-amino-acid polypeptide reads, in one-letter code: Probable GTP-binding protein EngB (210 aa).

The 175-residue stretch at 25-199 (TGIEVAFAGR…RQKLDTWFSE (175 aa)) folds into the EngB-type G domain. Residues 33–40 (GRSNAGKS), 60–64 (GRTQL), 78–81 (DLPG), 145–148 (TKTD), and 178–180 (FSS) each bind GTP. Residues Ser40 and Thr62 each coordinate Mg(2+).

Belongs to the TRAFAC class TrmE-Era-EngA-EngB-Septin-like GTPase superfamily. EngB GTPase family. Mg(2+) is required as a cofactor.

Necessary for normal cell division and for the maintenance of normal septation. This Escherichia coli O6:K15:H31 (strain 536 / UPEC) protein is Probable GTP-binding protein EngB.